Reading from the N-terminus, the 355-residue chain is Methionine import ATP-binding protein MetN (355 aa).

Residues 8 to 250 (LKNIDITFTQ…PQEDLTQEFI (243 aa)) enclose the ABC transporter domain. An ATP-binding site is contributed by 42–49 (GYSGAGKS).

It belongs to the ABC transporter superfamily. Methionine importer (TC 3.A.1.24) family. In terms of assembly, the complex is composed of two ATP-binding proteins (MetN), two transmembrane proteins (MetI) and a solute-binding protein (MetQ).

The protein localises to the cell membrane. The catalysed reaction is L-methionine(out) + ATP + H2O = L-methionine(in) + ADP + phosphate + H(+). It catalyses the reaction D-methionine(out) + ATP + H2O = D-methionine(in) + ADP + phosphate + H(+). Functionally, part of the ABC transporter complex MetNIQ involved in methionine import. Responsible for energy coupling to the transport system. The chain is Methionine import ATP-binding protein MetN from Streptococcus thermophilus (strain CNRZ 1066).